Consider the following 457-residue polypeptide: MNGTVIPGTPIAVDFWSVRRAGGARLFFLSHMHSDHTVGLSSTWSRPLYCSPLTARLLHHRLKVPTRWIRPLEVGQSHAVGEEVTVTLLDANHCPGSVMFLFEGAFGTILYTGDFRYSPAMQREPALSGRRIDRLYLDNTNCRPHGALPSRSRAALQAAQLIRRHPQHRVVIGVYSLGKEELLVDLALEFGTWVVVSPSRLEQMRLLELPEVFTTEEGAGRIHAVDVAEIRWDTLVSWNVLHPTIAILPTGRPVKVTHPQIHLIPYSDHSSFSELCEFVKWLKPCSVIPIVKGDMCYASFQKYLSPDHQALPGLGIPKPLQVSVQWQSKTKKQKPVCLVKRAAQHSVPKGVVYEPLEEYIEQSDGLGGVTAPQQNSHESAFCSLEDGICFYDCKEEELSGEQPGGAMAAGTAGQSLVSDEDFPSELPKQYLLTPLNALKQSSFCKALKNLFIRWEPS.

Positions 425–437 match the TBM motif; sequence ELPKQYLLTPLNA.

This sequence belongs to the DNA repair metallo-beta-lactamase (DRMBL) family. In terms of assembly, interacts with TERF2; the interaction is direct.

Its subcellular location is the chromosome. It localises to the telomere. It is found in the nucleus. The catalysed reaction is a beta-lactam + H2O = a substituted beta-amino acid. 5'-3' exonuclease that plays a central role in telomere maintenance and protection during S-phase. Participates in the protection of telomeres against non-homologous end-joining (NHEJ)-mediated repair, thereby ensuring that telomeres do not fuse. Plays a key role in telomeric loop (T loop) formation by being recruited by TERF2 at the leading end telomeres and by processing leading-end telomeres immediately after their replication via its exonuclease activity: generates 3' single-stranded overhang at the leading end telomeres avoiding blunt leading-end telomeres that are vulnerable to end-joining reactions and expose the telomere end in a manner that activates the DNA repair pathways. May be required for DNA interstrand cross-link repair. Possesses beta-lactamase activity, catalyzing the hydrolysis of penicillin G and nitrocefin. Exhibits no activity towards other beta-lactam antibiotic classes including cephalosporins (cefotaxime) and carbapenems (imipenem). The chain is 5' exonuclease Apollo (DCLRE1B) from Gallus gallus (Chicken).